The primary structure comprises 208 residues: ATP phosphoribosyltransferase (208 aa).

Belongs to the ATP phosphoribosyltransferase family. Short subfamily. In terms of assembly, heteromultimer composed of HisG and HisZ subunits.

It localises to the cytoplasm. The enzyme catalyses 1-(5-phospho-beta-D-ribosyl)-ATP + diphosphate = 5-phospho-alpha-D-ribose 1-diphosphate + ATP. It participates in amino-acid biosynthesis; L-histidine biosynthesis; L-histidine from 5-phospho-alpha-D-ribose 1-diphosphate: step 1/9. Catalyzes the condensation of ATP and 5-phosphoribose 1-diphosphate to form N'-(5'-phosphoribosyl)-ATP (PR-ATP). Has a crucial role in the pathway because the rate of histidine biosynthesis seems to be controlled primarily by regulation of HisG enzymatic activity. The sequence is that of ATP phosphoribosyltransferase from Thermotoga neapolitana (strain ATCC 49049 / DSM 4359 / NBRC 107923 / NS-E).